A 678-amino-acid chain; its full sequence is MAITSVIEQMRQLIQLIAKHNHAYYVMDQPTISDSEYDHLFHQLKALEEQYPELVQADSPTTKVGGQALSKFESVTHVVPMLSLGNVFNQEDLFAFARRVEERLPNQKVQYEVELKLDGLAISLWYENGVLVRGVTRGDGETGEDITQNVKTIRNLPKVLHSEKYEIPRLLEVRGEVLMPKSGFEKLNADQEAKGEKTFANPRNAAAGSLRQLDPNIAAARPLAFYAYGIAQCEPNHGLTTMHDSLQWLTELGFQIAERQYLCNSIQEVQQRYEQIQQERPNLQVEIDGMVVKVDDLKQQQQLGFLSREPRWATAYKFPAQAALTTVEQIDWQVGRTGTLTPVARLNPVFVGGVTVSNVTLHNIGEIHRLDVRIGDTVSVYRTGDVIPKVEKVWPEFRPAEAEVVHLPESCPVCASPVVMPEGEALARCSGGLYCAAQRIEAIRHFVSRKAMDIEGLGDRWVESLLRLDLLKDVADIYHLHEHRETLLGIEKMGEKSVQNLIDAIEASKKTTLARFIYALGIRGVGETTARMLANTFQTLEALKAANVEALKKTPDVGDITAEWIADFFLAPHNIEVLDRLIAAGIHWDAPTAPTRQPLNGESWVLTGTLEQMTRDQATQMLQALGARVSGSVSSKTKCVVAGEKAGSKLEKAAKLGIPVMNETDFLSLMAGYGQTLS.

NAD(+) contacts are provided by residues 34–38 (DSEYD), 83–84 (SL), and Glu114. The active-site N6-AMP-lysine intermediate is the Lys116. NAD(+)-binding residues include Arg137, Glu176, Lys293, and Lys317. Cys411, Cys414, Cys429, and Cys435 together coordinate Zn(2+). The BRCT domain maps to 594–678 (PTRQPLNGES…LMAGYGQTLS (85 aa)).

Belongs to the NAD-dependent DNA ligase family. LigA subfamily. It depends on Mg(2+) as a cofactor. Requires Mn(2+) as cofactor.

The catalysed reaction is NAD(+) + (deoxyribonucleotide)n-3'-hydroxyl + 5'-phospho-(deoxyribonucleotide)m = (deoxyribonucleotide)n+m + AMP + beta-nicotinamide D-nucleotide.. Functionally, DNA ligase that catalyzes the formation of phosphodiester linkages between 5'-phosphoryl and 3'-hydroxyl groups in double-stranded DNA using NAD as a coenzyme and as the energy source for the reaction. It is essential for DNA replication and repair of damaged DNA. This chain is DNA ligase, found in Acinetobacter baumannii (strain AB307-0294).